A 274-amino-acid chain; its full sequence is 2,3,4,5-tetrahydropyridine-2,6-dicarboxylate N-succinyltransferase (274 aa).

The substrate site is built by Arg104 and Asp141.

Belongs to the transferase hexapeptide repeat family. Homotrimer.

The protein localises to the cytoplasm. The enzyme catalyses (S)-2,3,4,5-tetrahydrodipicolinate + succinyl-CoA + H2O = (S)-2-succinylamino-6-oxoheptanedioate + CoA. Its pathway is amino-acid biosynthesis; L-lysine biosynthesis via DAP pathway; LL-2,6-diaminopimelate from (S)-tetrahydrodipicolinate (succinylase route): step 1/3. The sequence is that of 2,3,4,5-tetrahydropyridine-2,6-dicarboxylate N-succinyltransferase from Buchnera aphidicola subsp. Baizongia pistaciae (strain Bp).